Reading from the N-terminus, the 116-residue chain is MENTARAILRYAHLSPYKARQVINLIRGKDIATALAILSQIPKKSARIVEKVLKSAIANAEFKGMDIDNLYISKIHAEEGPMLKRYTPKAHGRATMIRRRFSHIYVYLAEKQQEDK.

It belongs to the universal ribosomal protein uL22 family. In terms of assembly, part of the 50S ribosomal subunit.

Its function is as follows. This protein binds specifically to 23S rRNA; its binding is stimulated by other ribosomal proteins, e.g. L4, L17, and L20. It is important during the early stages of 50S assembly. It makes multiple contacts with different domains of the 23S rRNA in the assembled 50S subunit and ribosome. Functionally, the globular domain of the protein is located near the polypeptide exit tunnel on the outside of the subunit, while an extended beta-hairpin is found that lines the wall of the exit tunnel in the center of the 70S ribosome. In Sulfurihydrogenibium sp. (strain YO3AOP1), this protein is Large ribosomal subunit protein uL22.